We begin with the raw amino-acid sequence, 953 residues long: Coatomer subunit beta (953 aa).

Thr-2 carries the post-translational modification N-acetylthreonine. 6 HEAT repeats span residues 96–131, 132–168, 240–276, 277–314, 316–353, and 396–433; these read HEMILVCDAYRKDLQHPNEFIRGSTLRFLCKLKEAE, LLEPLMPAIRACLEHRHSYVRRNAVLAIYTIYRNFEH, SERARFIRCIYNLLQSSSPAVKYEAAGTLVTLSSAPT, AIKAAAQCYIDLIIKESDNNVKLIVLDRLIELKEHPAH, RVLQDLVMDILRVLSTPDLEVRKKTLQLALDLVSSRNV, and DMAANVIPVLMEFLSDNNEAAAADVLEFVREAIQRFDN. Residue Lys-494 is modified to N6-acetyllysine.

Oligomeric complex that consists of at least the alpha, beta, beta', gamma, delta, epsilon and zeta subunits. Interacts (via C-terminus) with HIV-1 Nef; the interaction is direct. Interacts with CAPN8 and PRKCE. Interacts with SCYL1. Interacts with COPG1. Interacts with ARF1 (myristoylated); this interaction is required for binding of COPB1 to Golgi membranes. Interacts (via trunk domain) with ARF1 (via switch I region); the interaction is direct. Interacts with KCNK2 (via N-terminus); this interaction increases the channel-mediated whole cell currents and promotes plasma membrane expression of KCNK2. Interacts with anthrax lethal factor (LF); this interaction may facilitate endosomal vesicle membrane translocation of LF and its release from the lumen of endosomal vesicles to external milieu. Interacts with STX17. Interacts with TMEM115. Interacts with TMEM41B.

Its subcellular location is the cytoplasm. It localises to the golgi apparatus membrane. It is found in the cytoplasmic vesicle. The protein localises to the COPI-coated vesicle membrane. The protein resides in the cell membrane. Its subcellular location is the endoplasmic reticulum-Golgi intermediate compartment. In terms of biological role, the coatomer is a cytosolic protein complex that binds to dilysine motifs and reversibly associates with Golgi non-clathrin-coated vesicles, which further mediate biosynthetic protein transport from the ER, via the Golgi up to the trans Golgi network. Coatomer complex is required for budding from Golgi membranes, and is essential for the retrograde Golgi-to-ER transport of dilysine-tagged proteins. In mammals, the coatomer can only be recruited by membranes associated to ADP-ribosylation factors (ARFs), which are small GTP-binding proteins; the complex also influences the Golgi structural integrity, as well as the processing, activity, and endocytic recycling of LDL receptors. Plays a functional role in facilitating the transport of kappa-type opioid receptor mRNAs into axons and enhances translation of these proteins. Required for limiting lipid storage in lipid droplets. Involved in lipid homeostasis by regulating the presence of perilipin family members PLIN2 and PLIN3 at the lipid droplet surface and promoting the association of adipocyte surface triglyceride lipase (PNPLA2) with the lipid droplet to mediate lipolysis. Involved in the Golgi disassembly and reassembly processes during cell cycle. Involved in autophagy by playing a role in early endosome function. Plays a role in organellar compartmentalization of secretory compartments including endoplasmic reticulum (ER)-Golgi intermediate compartment (ERGIC), Golgi, trans-Golgi network (TGN) and recycling endosomes, and in biosynthetic transport of CAV1. Promotes degradation of Nef cellular targets CD4 and MHC class I antigens by facilitating their trafficking to degradative compartments. This Pongo abelii (Sumatran orangutan) protein is Coatomer subunit beta (COPB1).